Here is a 445-residue protein sequence, read N- to C-terminus: Endoplasmic reticulum membrane adapter protein XK (445 aa).

Topologically, residues 1-2 (MK) are cytoplasmic. A helical membrane pass occupies residues 3–23 (FPASVLASVFLFVAETMAALY). Topologically, residues 24-37 (LSSTYRSAGDRMWQ) are extracellular. A helical membrane pass occupies residues 38–58 (ALTLFFSLMPCTLVQLTLLFV). Topologically, residues 59–68 (HRDLSRDRPL) are cytoplasmic. Residues 69–89 (VLLMHLLQLGPLYRCCEVFCI) form a helical membrane-spanning segment. Over 90-140 (YCQSDQNEEPYVSITKKRQMPKDGLSEEVEKEVGQSEGKLFTHRSAFSRAS) the chain is Extracellular. Ser-115 is modified (phosphoserine). The helical transmembrane segment at 141-161 (VIQAFLGSAPQLTLQLYITVL) threads the bilayer. The Cytoplasmic segment spans residues 162 to 170 (EQNITTGRF). Residues 171 to 191 (IMVLSLLSIVYGALRCNILAI) traverse the membrane as a helical segment. Residues 192–207 (KIKYDEYEVKVKPLAY) lie on the Extracellular side of the membrane. The chain crosses the membrane as a helical span at residues 208-228 (VCIFLWRSFEIATRVIVLVLF). Residues 229–234 (TSVLKI) are Cytoplasmic-facing. Residues 235–255 (WVVVVILVNFFSFFLYPWILF) form a helical membrane-spanning segment. The Extracellular segment spans residues 256-276 (WNSGSPFPENIEKALTRVGTT). A helical transmembrane segment spans residues 277–297 (IVLGFLTLLYAGINMFCWSAV). Residues 298–316 (QLKIDNPELISKSQNWYRL) are Cytoplasmic-facing. Residues 317-337 (LIYYMMRFVENSVLLLLWFFF) form a helical membrane-spanning segment. The Extracellular segment spans residues 338–348 (KTDIYMYVCAP). The chain crosses the membrane as a helical span at residues 349 to 369 (LLILQLLIGYCTSILFMLVFY). Residues 370 to 445 (QFFHPCKKLF…IWTAVDLCST (76 aa)) lie on the Cytoplasmic side of the membrane.

Belongs to the XK family. Heterodimer with Kell; disulfide-linked. Interacts with VPS13A.

It is found in the endoplasmic reticulum membrane. In terms of biological role, recruits the lipid transfer protein VPS13A from lipid droplets to the endoplasmic reticulum (ER) membrane. The protein is Endoplasmic reticulum membrane adapter protein XK of Rattus norvegicus (Rat).